The primary structure comprises 60 residues: Small integral membrane protein 3 (60 aa).

A helical membrane pass occupies residues Ile-20–Cys-40.

The protein resides in the membrane. The polypeptide is Small integral membrane protein 3 (SMIM3) (Homo sapiens (Human)).